Reading from the N-terminus, the 454-residue chain is uncharacterized protein (454 aa).

Residues 364–405 (CSRPGCDAPAYHSEVHHVTPWTTTHRTDINDLTLACGPDNRL) form the HNH domain. Residues 415-434 (NAKGDTEWLPPAHLDHGQPR) form a disordered region.

This sequence belongs to the Rv1128c/1148c/1588c/1702c/1945/3466 family.

This is an uncharacterized protein from Mycobacterium tuberculosis (strain CDC 1551 / Oshkosh).